The chain runs to 3016 residues: Genome polyprotein (3016 aa).

At Ser2 the chain carries N-acetylserine; by host. Residues 2–23 form an interaction with STAT1 region; it reads STLPKPQRKTKRNTNRRPMDVK. The segment at 2–58 is interaction with EIF2AK2/PKR; the sequence is STLPKPQRKTKRNTNRRPMDVKFPGGGQIVGGVYLLPRRGPRLGVRATRKTSERSQP. The interaction with DDX3X stretch occupies residues 2 to 59; that stretch reads STLPKPQRKTKRNTNRRPMDVKFPGGGQIVGGVYLLPRRGPRLGVRATRKTSERSQPR. A disordered region spans residues 2 to 75; the sequence is STLPKPQRKT…PKARQSQGRH (74 aa). Topologically, residues 2–168 are cytoplasmic; sequence STLPKPQRKT…EDGINYATGN (167 aa). 2 short sequence motifs (nuclear localization signal) span residues 5-13 and 38-43; these read PKPQRKTKR and PRRGPR. The span at 7 to 16 shows a compositional bias: basic residues; sequence PQRKTKRNTN. The span at 32–47 shows a compositional bias: low complexity; sequence GGVYLLPRRGPRLGVR. Ser53 is subject to Phosphoserine; by host. Short sequence motifs (nuclear localization signal) lie at residues 58 to 64 and 66 to 71; these read PRGRRQP and PKARQS. A phosphoserine; by host mark is found at Ser99 and Ser116. An important for endoplasmic reticulum and mitochondrial localization region spans residues 112–152; the sequence is PRRRSRNLGKVIDTLTCGFADLMGYIPVVGAPLGGVAAALA. An interaction with APOA2 region spans residues 122–173; it reads VIDTLTCGFADLMGYIPVVGAPLGGVAAALAHGVRAIEDGINYATGNLPGCS. The important for lipid droplets localization stretch occupies residues 164–167; sequence YATG. The helical transmembrane segment at 169 to 189 threads the bilayer; that stretch reads LPGCSFSIFLLALLSCLTTPA. The propeptide at 178-191 is ER anchor for the core protein, removed in mature form by host signal peptidase; sequence LLALLSCLTTPASA. The Lumenal segment spans residues 190–358; sequence SAVHYRNISG…LEGHWGVIGA (169 aa). Asn196, Asn209, Asn234, and Asn250 each carry an N-linked (GlcNAc...) asparagine; by host glycan. The interval 265 to 296 is important for fusion; that stretch reads LVGSAAACSALYIGDLCGGVFLVGQLFTFRPR. The N-linked (GlcNAc...) asparagine; by host glycan is linked to Asn305. Residues 359–379 form a helical membrane-spanning segment; the sequence is LLYYSMVANWAKVFAVLLLFA. The Lumenal segment spans residues 380–727; the sequence is GVDATTHIGS…WEYIVLAFLV (348 aa). Residues 385–411 are HVR1; that stretch reads THIGSSASATTNRLTSFFSPGSKQNVQ. Residues Asn416, Asn422, and Asn429 are each glycosylated (N-linked (GlcNAc...) (high mannose) asparagine; by host). 4 disulfides stabilise this stretch: Cys428–Cys552, Cys451–Cys458, Cys486–Cys494, and Cys503–Cys508. N-linked (GlcNAc...) asparagine; by host glycosylation occurs at Asn447. An HVR2 region spans residues 474–478; sequence ANISG. An N-linked (GlcNAc...) asparagine; by host glycan is attached at Asn475. The CD81-binding 1 stretch occupies residues 480–493; the sequence is SNDKPYCWHYPPRP. Asn532 is a glycosylation site (N-linked (GlcNAc...) asparagine; by host). Residues 544-551 are CD81-binding 2; that stretch reads PPRGSWFG. Asn556 carries an N-linked (GlcNAc...) asparagine; by host glycan. 4 disulfide bridges follow: Cys564/Cys569, Cys583/Cys587, Cys599/Cys622, and Cys609/Cys646. N-linked (GlcNAc...) (high mannose) asparagine; by host glycans are attached at residues Asn625 and Asn647. Cys654 and Cys679 form a disulfide bridge. Residues 662 to 673 form a PKR/eIF2-alpha phosphorylation homology domain (PePHD) region; the sequence is VEMSPLLFSTTQ. Residues 728 to 748 form a helical membrane-spanning segment; sequence LAVARVCACLWLMFLVGQAEA. Over 749–759 the chain is Lumenal; it reads ALENLIVLNAT. The helical transmembrane segment at 760-780 threads the bilayer; the sequence is SAAGSQGWVWGVVFICAAWYI. Residues 781-784 lie on the Cytoplasmic side of the membrane; that stretch reads RGRA. A helical transmembrane segment spans residues 785-805; it reads APITTYAILQLWPLLLLVLAL. Residues 806–815 are Lumenal-facing; it reads PRRAYAYNGE. The helical transmembrane segment at 816 to 836 threads the bilayer; it reads EAASLGMLAIVIITIFTLTPA. At 837–883 the chain is on the cytoplasmic side; it reads YKTLLISTLWWIQYYIARAEAMLYVWVPSLQVRGGRDAVILLTCLLH. Residues 884-904 traverse the membrane as a helical segment; it reads PQLGFEVTKAILALLGPLYIL. Topologically, residues 905-930 are lumenal; sequence QYSLLKTPYFVRAHILLRVCMFLRGV. Positions 905–1028 constitute a Peptidase C18 domain; that stretch reads QYSLLKTPYF…DIRDGGWRLL (124 aa). The protease NS2-3 stretch occupies residues 906–1208; it reads YSLLKTPYFV…PVENMQSTAR (303 aa). Residue Cys924 is the site of S-palmitoyl cysteine; by host attachment. A helical membrane pass occupies residues 931-951; sequence AGGKYVQAALLRLGAWTGTYI. Residues 931–951 are interaction with host SCPS1; that stretch reads AGGKYVQAALLRLGAWTGTYI. Residues 952–1659 lie on the Cytoplasmic side of the membrane; it reads YDHLTPLSDW…CMSADLEVIT (708 aa). Active-site for protease NS2 activity; shared with dimeric partner residues include His954, Glu974, and Cys995. Residues 1029–1210 enclose the Peptidase S29 domain; that stretch reads APITAYAQQT…ENMQSTARSP (182 aa). Active-site charge relay system; for serine protease NS3 activity residues include His1085 and Asp1109. Zn(2+) contacts are provided by Cys1125 and Cys1127. Ser1167 serves as the catalytic Charge relay system; for serine protease NS3 activity. The Zn(2+) site is built by Cys1173 and His1177. The Helicase ATP-binding domain maps to 1219-1371; sequence PAVPQTYQVG…PNITEVALSS (153 aa). 1232 to 1239 provides a ligand contact to ATP; sequence APTGSGKS. Ser1239 and Glu1319 together coordinate Mg(2+). Positions 1318–1321 match the DECH box motif; the sequence is DECH. An RNA-binding region spans residues 1488–1500; sequence QRRGRTGRGKHGV. The chain crosses the membrane as a helical span at residues 1660 to 1680; the sequence is STWVLVGGVLAALAAYCLSVG. Residues 1681–1692 are NS3-binding; it reads CVVVCGRISTTG. Residues 1681–1807 are Cytoplasmic-facing; sequence CVVVCGRIST…SLTSPLSTST (127 aa). Residues 1808–1828 form a helical membrane-spanning segment; sequence TLLLNILGGWVASQLANPTAS. Topologically, residues 1829–1830 are lumenal; that stretch reads TA. A helical transmembrane segment spans residues 1831–1851; the sequence is FVVSGLAGATVGSIGLGRVLV. Position 1852 (Asp1852) is a topological domain, cytoplasmic. A helical transmembrane segment spans residues 1853-1873; that stretch reads IIAGYGAGVSGALVAFKIMSG. Over 1874–1883 the chain is Lumenal; it reads ETPSAEDMVN. The chain crosses the membrane as a helical span at residues 1884 to 1904; the sequence is LLPALLSPGALVVGVVCAAIL. The Cytoplasmic portion of the chain corresponds to 1905–1974; it reads RRHAGPAEGA…WINSDWSTPC (70 aa). The S-palmitoyl cysteine; by host moiety is linked to residue Cys1974. Residues 1975-2004 lie within the membrane without spanning it; the sequence is SGSWLRDIWDWVCTVLSDFKVWLKSKLVPA. Topologically, residues 2005–2995 are cytoplasmic; sequence LPGVPFLSCQ…YHSVSRARPR (991 aa). Zn(2+) is bound by residues Cys2013, Cys2031, Cys2033, and Cys2054. An FKBP8-binding region spans residues 2122–2210; it reads EFFTEVDGVR…ASSLASQLSA (89 aa). Residues 2122-2335 are transcriptional activation; it reads EFFTEVDGVR…PVPPPRRKSV (214 aa). Residues 2137-2141 form an interaction with non-structural protein 4A region; that stretch reads PACKP. The interval 2191-2443 is interaction with host SKP2; it reads RLARGSPPSC…ALVTPCAAEE (253 aa). 6 positions are modified to phosphoserine; by host: Ser2196, Ser2199, Ser2203, Ser2206, Ser2209, and Ser2212. The ISDR stretch occupies residues 2212–2251; the sequence is SLKATCTTHCAHPDADLIEANLLWRQEVGGNITRVESENK. Residues 2212 to 2277 are interaction with EIF2AK2/PKR; sequence SLKATCTTHC…REPSVPAECH (66 aa). The tract at residues 2251 to 2309 is NS4B-binding; the sequence is KVIVLDSFDPLVPEYDDREPSVPAECHRPNRPKFPPALPIWARPDYNPPLLETWKKPDY. Residues 2302–2379 are V3; it reads ETWKKPDYAP…PTTSKSSDQA (78 aa). Residues 2325–2328 carry the SH3-binding motif; the sequence is PPVP. Residues 2330–2338 carry the Nuclear localization signal motif; the sequence is PRRKSVVHL. A Glycyl lysine isopeptide (Lys-Gly) (interchain with G-Cter in ubiquitin) cross-link involves residue Lys2353. Residues 2353-2414 form a disordered region; the sequence is KSFPTQPAST…PDLSSGSWST (62 aa). The segment covering 2355 to 2376 has biased composition (polar residues); that stretch reads FPTQPASTPDSDSGHPTTSKSS. Ser2454 carries the phosphoserine; by host modification. The RdRp catalytic domain maps to 2639-2757; that stretch reads PMGFSYDTRC…IAESAGVQED (119 aa). Asp2645, Asp2743, and Asp2744 together coordinate Mg(2+). The helical transmembrane segment at 2996-3016 threads the bilayer; the sequence is IFLLCLLLLSVGVGIFLLPAR.

Belongs to the hepacivirus polyprotein family. In terms of assembly, homooligomer. Interacts with E1 (via C-terminus). Interacts with the non-structural protein 5A. Interacts (via N-terminus) with host STAT1 (via SH2 domain); this interaction results in decreased STAT1 phosphorylation and ubiquitin-mediated proteasome-dependent STAT1 degradation, leading to decreased IFN-stimulated gene transcription. Interacts with host STAT3; this interaction constitutively activates STAT3. Interacts with host LTBR receptor. Interacts with host TNFRSF1A receptor and possibly induces apoptosis. Interacts with host HNRPK. Interacts with host YWHAE. Interacts with host UBE3A/E6AP. Interacts with host DDX3X. Interacts with host APOA2. Interacts with host RXRA protein. Interacts with host SP110 isoform 3/Sp110b; this interaction sequesters the transcriptional corepressor SP110 away from the nucleus. Interacts with host CREB3 nuclear transcription protein; this interaction triggers cell transformation. Interacts with host ACY3. Interacts with host C1QR1. Interacts with host RBM24; this interaction, which enhances the interaction of the mature core protein with 5'-UTR, may inhibit viral translation and favor replication. Interacts with host EIF2AK2/PKR; this interaction induces the autophosphorylation of EIF2AK2. Part of the viral assembly initiation complex composed of NS2, E1, E2, NS3, NS4A, NS5A and the mature core protein. As to quaternary structure, forms a heterodimer with envelope glycoprotein E2. Interacts with mature core protein. Interacts with protease NS2. The heterodimer E1/E2 interacts with host CLDN1; this interaction plays a role in viral entry into host cell. Interacts with host SPSB2 (via C-terminus). Part of the viral assembly initiation complex composed of NS2, E1, E2, NS3, NS4A, NS5A and the mature core protein. Interacts with host NEURL3; this interaction prevents E1 binding to glycoprotein E2. Forms a heterodimer with envelope glycoprotein E1. Interacts with host CD81 and SCARB1 receptors; these interactions play a role in viral entry into host cell. Interacts with host EIF2AK2/PKR; this interaction inhibits EIF2AK2 and probably allows the virus to evade the innate immune response. Interacts with host CD209/DC-SIGN and CLEC4M/DC-SIGNR. Interact with host SPCS1; this interaction is essential for viral particle assembly. Interacts with protease NS2. The heterodimer E1/E2 interacts with host CLDN1; this interaction plays a role in viral entry into host cell. Part of the viral assembly initiation complex composed of NS2, E1, E2, NS3, NS4A, NS5A and the mature core protein. Interacts with host SLC3A2/4F2hc; the interaction may facilitate viral entry into host cell. Interacts with human PLSCR1. In terms of assembly, homohexamer. Homoheptamer. Interacts with protease NS2. As to quaternary structure, homodimer. Interacts with host SPCS1; this interaction is essential for viral particle assembly. Interacts with envelope glycoprotein E1. Interacts with envelope glycoprotein E2. Interacts with viroporin p7. Interacts with serine protease/helicase NS3. Part of the replication complex composed of NS2, NS3, NS4A, NS4B, NS5A and the RNA-directed RNA polymerase embedded in an ER-derived membranous web. Part of the viral assembly initiation complex composed of NS2, E1, E2, NS3, NS4A, NS5A and the mature core protein. Interacts with protease NS2. Interacts with non-structural protein 4A; this interaction stabilizes the folding of NS3 serine protease. NS3-NS4A interaction is essential for NS3 activation and allows membrane anchorage of the latter. NS3/NS4A complex also prevents phosphorylation of host IRF3, thus preventing the establishment of dsRNA induced antiviral state. Interacts with host MAVS; this interaction leads to the cleavage and inhibition of host MAVS. Interacts with host TICAM1; this interaction leads to the cleavage and inhibition of host TICAM1. Interacts with host TANK-binding kinase/TBK1; this interaction results in the inhibition of the association between TBK1 and IRF3, which leads to the inhibition of IRF3 activation. Interacts with host RBM24. Part of the replication complex composed of NS2, NS3, NS4A, NS4B, NS5A and the RNA-directed RNA polymerase embedded in an ER-derived membranous web. Part of the viral assembly initiation complex composed of NS2, E1, E2, NS3, NS4A, NS5A and the mature core protein. In terms of assembly, interacts with NS3 serine protease; this interaction stabilizes the folding of NS3 serine protease. NS3-NS4A interaction is essential for NS3 activation and allows membrane anchorage of the latter. Interacts with non-structural protein 5A (via N-terminus). Part of the replication complex composed of NS2, NS3, NS4A, NS4B, NS5A and the RNA-directed RNA polymerase embedded in an ER-derived membranous web. Part of the viral assembly initiation complex composed of NS2, E1, E2, NS3, NS4A, NS5A and the mature core protein. As to quaternary structure, homomultimer. Interacts with non-structural protein NS5A. Interacts with host PLA2G4C; this interaction likely initiates the recruitment of replication complexes to lipid droplets. Interacts with host STING; this interaction disrupts the interaction between STING and TBK1 thereby suppressing the interferon signaling. Part of the replication complex composed of NS2, NS3, NS4A, NS4B, NS5A and the RNA-directed RNA polymerase embedded in an ER-derived membranous web. Monomer. Homodimer; dimerization is required for RNA-binding. Interacts with the mature core protein. Interacts (via N-terminus) with non-structural protein 4A. Interacts with non-structural protein 4B. Interacts (via region D2) with RNA-directed RNA polymerase. Part of the viral assembly initiation complex composed of NS2, E1, E2, NS3, NS4A, NS5A and the mature core protein. Part of the replication complex composed of NS2, NS3, NS4A, NS4B, NS5A and the RNA-directed RNA polymerase embedded in an ER-derived membranous web. Interacts with host GRB2. Interacts with host BIN1. Interacts with host PIK3R1. Interacts with host SRCAP. Interacts with host FKBP8. Interacts (via C-terminus) with host VAPB (via MSP domain). Interacts with host EIF2AK2/PKR; this interaction leads to disruption of EIF2AK2 dimerization by NS5A and probably allows the virus to evade the innate immune response. Interacts (via N-terminus) with host PACSIN2 (via N-terminus); this interaction attenuates protein kinase C alpha-mediated phosphorylation of PACSIN2 by disrupting the interaction between PACSIN2 and PRKCA. Interacts (via N-terminus) with host SRC kinase (via SH2 domain). Interacts with most Src-family kinases. Interacts with host IFI27 and SKP2; promotes the ubiquitin-mediated proteasomal degradation of NS5A. Interacts with host GPS2. Interacts with host TNFRSF21; this interaction allows the modulation by the virus of JNK, p38 MAPK, STAT3, and Akt signaling pathways in a DR6-dependent manner. Interacts (via N-terminus) with host CIDEB (via N-terminus); this interaction seems to regulate the association of HCV particles with APOE. Interacts with host CHKA/Choline Kinase-alpha; CHKA bridges host PI4KA and NS5A and potentiates NS5A-stimulated PI4KA activity, which then facilitates the targeting of the ternary complex to the ER for viral replication. Interacts with host SPSB2 (via C-terminus); this interaction targets NS5A for ubiquitination and degradation. Interacts with host RAB18; this interaction may promote the association of NS5A and other replicase components with lipid droplets. Interacts (via region D2) with host PPIA/CYPA; the interaction stimulates RNA-binding ability of NS5A and is dependent on the peptidyl-prolyl cis-trans isomerase activity of PPIA/CYPA. Interacts with host TRIM14; this interaction induces the degradation of NS5A. In terms of assembly, homooligomer. Interacts with non-structural protein 5A. Interacts with host VAPB. Interacts with host PRK2/PKN2. Interacts with host HNRNPA1 and SEPT6; these interactions facilitate viral replication. Part of the replication complex composed of NS2, NS3, NS4A, NS4B, NS5A and the RNA-directed RNA polymerase. The cofactor is Zn(2+). Mg(2+) serves as cofactor. In terms of processing, specific enzymatic cleavages in vivo yield mature proteins. The structural proteins, core, E1, E2 and p7 are produced by proteolytic processing by host signal peptidases. The core protein precursor is synthesized as a 23 kDa, which is retained in the ER membrane through the hydrophobic signal peptide. Cleavage by the signal peptidase releases the 21 kDa mature core protein. The cleavage of the core protein precursor occurs between aminoacids 176 and 188 but the exact cleavage site is not known. Some degraded forms of the core protein appear as well during the course of infection. The other proteins (p7, NS2, NS3, NS4A, NS4B, NS5A and NS5B) are cleaved by the viral proteases. Autoprocessing between NS2 and NS3 is mediated by the NS2 cysteine protease catalytic domain and regulated by the NS3 N-terminal domain. Post-translationally, phosphorylated by host PKC and PKA. Ubiquitinated; mediated by UBE3A and leading to core protein subsequent proteasomal degradation. In terms of processing, highly N-glycosylated. Post-translationally, palmitoylation is required for NS2/3 autoprocessing and E2 recruitment to membranes. Palmitoylated. This modification may play a role in its polymerization or in protein-protein interactions. In terms of processing, phosphorylated on serines in a basal form termed p56. p58 is a hyperphosphorylated form of p56. p56 and p58 coexist in the cell in roughly equivalent amounts. Hyperphosphorylation is dependent on the presence of NS4A. Host CSNK1A1/CKI-alpha or RPS6KB1 kinases may be responsible for NS5A phosphorylation. Post-translationally, tyrosine phosphorylation is essential for the interaction with host SRC. Ubiquitinated. Ubiquitination, most probably at Lys-2353, mediated by host IFI27 and SKP2 leads to proteasomal degradation, restricting viral infection. Ubiquitination by host TRIM22 leads to interruption of viral replication. In terms of processing, the N-terminus is phosphorylated by host PRK2/PKN2.

It localises to the host endoplasmic reticulum membrane. The protein localises to the host mitochondrion membrane. The protein resides in the virion. It is found in the host cytoplasm. Its subcellular location is the host nucleus. It localises to the host lipid droplet. The protein localises to the virion membrane. The protein resides in the host mitochondrion. It is found in the host cell membrane. Its subcellular location is the host perinuclear region. The catalysed reaction is Hydrolysis of four peptide bonds in the viral precursor polyprotein, commonly with Asp or Glu in the P6 position, Cys or Thr in P1 and Ser or Ala in P1'.. The enzyme catalyses a ribonucleoside 5'-triphosphate + H2O = a ribonucleoside 5'-diphosphate + phosphate + H(+). It catalyses the reaction ATP + H2O = ADP + phosphate + H(+). It carries out the reaction RNA(n) + a ribonucleoside 5'-triphosphate = RNA(n+1) + diphosphate. Its activity is regulated as follows. Inhibited by the antiviral drug hexamethylene amiloride. Inhibition by amantadine appears to be genotype-dependent. Also inhibited by long-alkyl-chain iminosugar derivatives. With respect to regulation, activity is up-regulated by PRK2/PKN2-mediated phosphorylation. Its function is as follows. Packages viral RNA to form a viral nucleocapsid, and promotes virion budding. Participates in the viral particle production as a result of its interaction with the non-structural protein 5A. Binds RNA and may function as a RNA chaperone to induce the RNA structural rearrangements taking place during virus replication. Modulates viral translation initiation by interacting with viral IRES and 40S ribosomal subunit. Affects various cell signaling pathways, host immunity and lipid metabolism. Prevents the establishment of cellular antiviral state by blocking the interferon-alpha/beta (IFN-alpha/beta) and IFN-gamma signaling pathways and by blocking the formation of phosphorylated STAT1 and promoting ubiquitin-mediated proteasome-dependent degradation of STAT1. Activates STAT3 leading to cellular transformation. Regulates the activity of cellular genes, including c-myc and c-fos. May repress the promoter of p53, and sequester CREB3 and SP110 isoform 3/Sp110b in the cytoplasm. Represses cell cycle negative regulating factor CDKN1A, thereby interrupting an important check point of normal cell cycle regulation. Targets transcription factors involved in the regulation of inflammatory responses and in the immune response: suppresses TNF-induced NF-kappa-B activation, and activates AP-1. Binds to dendritic cells (DCs) via C1QR1, resulting in down-regulation of T-lymphocytes proliferation. Alters lipid metabolism by interacting with hepatocellular proteins involved in lipid accumulation and storage. Induces up-regulation of FAS promoter activity, and thereby contributes to the increased triglyceride accumulation in hepatocytes (steatosis). Forms a heterodimer with envelope glycoprotein E2, which mediates virus attachment to the host cell, virion internalization through clathrin-dependent endocytosis and fusion with host membrane. Fusion with the host cell is most likely mediated by both E1 and E2, through conformational rearrangements of the heterodimer required for fusion rather than a classical class II fusion mechanism. E1/E2 heterodimer binds host apolipoproteins such as APOB and ApoE thereby forming a lipo-viro-particle (LVP). APOE associated to the LVP allows the initial virus attachment to cell surface receptors such as the heparan sulfate proteoglycans (HSPGs), syndecan-1 (SDC1), syndecan-1 (SDC2), the low-density lipoprotein receptor (LDLR) and scavenger receptor class B type I (SCARB1). The cholesterol transfer activity of SCARB1 allows E2 exposure and binding of E2 to SCARB1 and the tetraspanin CD81. E1/E2 heterodimer binding on CD81 activates the epithelial growth factor receptor (EGFR) signaling pathway. Diffusion of the complex E1-E2-EGFR-SCARB1-CD81 to the cell lateral membrane allows further interaction with Claudin 1 (CLDN1) and occludin (OCLN) to finally trigger HCV entry. In terms of biological role, forms a heterodimer with envelope glycoprotein E1, which mediates virus attachment to the host cell, virion internalization through clathrin-dependent endocytosis and fusion with host membrane. Fusion with the host cell is most likely mediated by both E1 and E2, through conformational rearrangements of the heterodimer required for fusion rather than a classical class II fusion mechanism. The interaction between envelope glycoprotein E2 and host apolipoprotein E/APOE allows the proper assembly, maturation and infectivity of the viral particles. This interaction is probably promoted via the up-regulation of cellular autophagy by the virus. E1/E2 heterodimer binds host apolipoproteins such as APOB and APOE thereby forming a lipo-viro-particle (LVP). APOE associated to the LVP allows the initial virus attachment to cell surface receptors such as the heparan sulfate proteoglycans (HSPGs), syndecan-1 (SDC1), syndecan-1 (SDC2), the low-density lipoprotein receptor (LDLR) and scavenger receptor class B type I (SCARB1). The cholesterol transfer activity of SCARB1 allows E2 exposure and binding of E2 to SCARB1 and the tetraspanin CD81. E1/E2 heterodimer binding on CD81 activates the epithelial growth factor receptor (EGFR) signaling pathway. Diffusion of the complex E1-E2-EGFR-SCARB1-CD81 to the cell lateral membrane allows further interaction with Claudin 1 (CLDN1) and occludin (OCLN) to finally trigger HCV entry. Inhibits host EIF2AK2/PKR activation, preventing the establishment of an antiviral state. Viral ligand for CD209/DC-SIGN and CLEC4M/DC-SIGNR, which are respectively found on dendritic cells (DCs), and on liver sinusoidal endothelial cells and macrophage-like cells of lymph node sinuses. These interactions allow the capture of circulating HCV particles by these cells and subsequent facilitated transmission to permissive cells such as hepatocytes and lymphocyte subpopulations. The interaction between E2 and host amino acid transporter complex formed by SLC3A2 and SLC7A5/LAT1 may facilitate viral entry into host cell. Functionally, ion channel protein that acts as a viroporin and plays an essential role in the assembly, envelopment and secretion of viral particles. Regulates the host cell secretory pathway, which induces the intracellular retention of viral glycoproteins and favors assembly of viral particles. Creates a pore in acidic organelles and releases Ca(2+) and H(+) in the cytoplasm of infected cells, leading to a productive viral infection. High levels of cytoplasmic Ca(2+) may trigger membrane trafficking and transport of viral ER-associated proteins to viroplasms, sites of viral genome replication. This ionic imbalance induces the assembly of the inflammasome complex, which triggers the maturation of pro-IL-1beta into IL-1beta through the action of caspase-1. Targets also host mitochondria and induces mitochondrial depolarization. In addition of its role as a viroporin, acts as a lipid raft adhesion factor. Its function is as follows. Cysteine protease required for the proteolytic auto-cleavage between the non-structural proteins NS2 and NS3. The N-terminus of NS3 is required for the function of NS2 protease (active region NS2-3). Promotes the initiation of viral particle assembly by mediating the interaction between structural and non-structural proteins. Displays three enzymatic activities: serine protease with a chymotrypsin-like fold, NTPase and RNA helicase. NS3 serine protease, in association with NS4A, is responsible for the cleavages of NS3-NS4A, NS4A-NS4B, NS4B-NS5A and NS5A-NS5B. The NS3/NS4A complex prevents phosphorylation of host IRF3, thus preventing the establishment of dsRNA induced antiviral state. The NS3/NS4A complex induces host amino acid transporter component SLC3A2, thus contributing to HCV propagation. NS3 RNA helicase binds to RNA and unwinds both dsDNA and dsRNA in the 3' to 5' direction, and likely resolves RNA complicated stable secondary structures in the template strand. Binds a single ATP and catalyzes the unzipping of a single base pair of dsRNA. Inhibits host antiviral proteins TBK1 and IRF3 thereby preventing the establishment of an antiviral state. Cleaves host MAVS/CARDIF thereby preventing the establishment of an antiviral state. Cleaves host TICAM1/TRIF, thereby disrupting TLR3 signaling and preventing the establishment of an antiviral state. In terms of biological role, peptide cofactor which forms a non-covalent complex with the N-terminal of NS3 serine protease. The NS3/NS4A complex prevents phosphorylation of host IRF3, thus preventing the establishment of dsRNA induced antiviral state. The NS3/NS4A complex induces host amino acid transporter component SLC3A2, thus contributing to HCV propagation. Functionally, induces a specific membrane alteration that serves as a scaffold for the virus replication complex. This membrane alteration gives rise to the so-called ER-derived membranous web that contains the replication complex. NS4B self-interaction contributes to its function in membranous web formation. Promotes host TRIF protein degradation in a CASP8-dependent manner thereby inhibiting host TLR3-mediated interferon signaling. Disrupts the interaction between STING and TBK1 contributing to the inhibition of interferon signaling. Its function is as follows. Phosphorylated protein that is indispensable for viral replication and assembly. Both hypo- and hyperphosphorylated states are required for the viral life cycle. The hyperphosphorylated form of NS5A is an inhibitor of viral replication. Involved in RNA-binding and especially in binding to the viral genome. Zinc is essential for RNA-binding. Participates in the viral particle production as a result of its interaction with the mature viral core protein. Its interaction with host VAPB may target the viral replication complex to vesicles. Down-regulates viral IRES translation initiation. Mediates interferon resistance, presumably by interacting with and inhibiting host EIF2AK2/PKR. Prevents BIN1-induced apoptosis. Acts as a transcriptional activator of some host genes important for viral replication when localized in the nucleus. Via the interaction with host PACSIN2, modulates lipid droplet formation in order to promote virion assembly. Modulates TNFRSF21/DR6 signaling pathway for viral propagation. RNA-dependent RNA polymerase that performs primer-template recognition and RNA synthesis during viral replication. Initiates RNA transcription/replication at a flavin adenine dinucleotide (FAD), resulting in a 5'- FAD cap on viral RNAs. In this way, recognition of viral 5' RNA by host pattern recognition receptors can be bypassed, thereby evading activation of antiviral pathways. The polypeptide is Genome polyprotein (Hepatitis C virus genotype 6k (isolate VN405) (HCV)).